The primary structure comprises 185 residues: Elongation factor P (185 aa).

The protein belongs to the elongation factor P family.

It localises to the cytoplasm. It functions in the pathway protein biosynthesis; polypeptide chain elongation. Functionally, involved in peptide bond synthesis. Stimulates efficient translation and peptide-bond synthesis on native or reconstituted 70S ribosomes in vitro. Probably functions indirectly by altering the affinity of the ribosome for aminoacyl-tRNA, thus increasing their reactivity as acceptors for peptidyl transferase. This is Elongation factor P from Deinococcus radiodurans (strain ATCC 13939 / DSM 20539 / JCM 16871 / CCUG 27074 / LMG 4051 / NBRC 15346 / NCIMB 9279 / VKM B-1422 / R1).